Reading from the N-terminus, the 76-residue chain is Protein sigN132 (76 aa).

Polar residues predominate over residues 1 to 13; it reads MLFESISTLSNLK. Residues 1-33 are disordered; sequence MLFESISTLSNLKSASKSSMIASTGSTSSKSSN. Over residues 14–33 the composition is skewed to low complexity; the sequence is SASKSSMIASTGSTSSKSSN.

The chain is Protein sigN132 from Dictyostelium discoideum (Social amoeba).